The sequence spans 290 residues: 4-hydroxy-tetrahydrodipicolinate synthase (290 aa).

Thr44 is a binding site for pyruvate. Tyr132 acts as the Proton donor/acceptor in catalysis. Catalysis depends on Lys160, which acts as the Schiff-base intermediate with substrate. Ile202 contacts pyruvate.

This sequence belongs to the DapA family. In terms of assembly, homotetramer; dimer of dimers.

The protein localises to the cytoplasm. It carries out the reaction L-aspartate 4-semialdehyde + pyruvate = (2S,4S)-4-hydroxy-2,3,4,5-tetrahydrodipicolinate + H2O + H(+). The protein operates within amino-acid biosynthesis; L-lysine biosynthesis via DAP pathway; (S)-tetrahydrodipicolinate from L-aspartate: step 3/4. Functionally, catalyzes the condensation of (S)-aspartate-beta-semialdehyde [(S)-ASA] and pyruvate to 4-hydroxy-tetrahydrodipicolinate (HTPA). The chain is 4-hydroxy-tetrahydrodipicolinate synthase from Citrifermentans bemidjiense (strain ATCC BAA-1014 / DSM 16622 / JCM 12645 / Bem) (Geobacter bemidjiensis).